Here is a 382-residue protein sequence, read N- to C-terminus: Probable protein phosphatase 2C 65 (382 aa).

In terms of domain architecture, PPM-type phosphatase spans 47-337; sequence HVSMSIKQGK…DDCAVVVLYL (291 aa). The Mn(2+) site is built by Asp-83 and Gly-84. The disordered stretch occupies residues 107 to 126; sequence KIRSSKSAGDENIENNSSQS. Mn(2+) contacts are provided by Asp-282 and Asp-328.

Belongs to the PP2C family. Mg(2+) serves as cofactor. It depends on Mn(2+) as a cofactor.

It catalyses the reaction O-phospho-L-seryl-[protein] + H2O = L-seryl-[protein] + phosphate. The catalysed reaction is O-phospho-L-threonyl-[protein] + H2O = L-threonyl-[protein] + phosphate. In Arabidopsis thaliana (Mouse-ear cress), this protein is Probable protein phosphatase 2C 65.